The primary structure comprises 319 residues: Acetyl-coenzyme A carboxylase carboxyl transferase subunit alpha (319 aa).

Residues 35–296 (NIDEEVHRLR…KAQLLEDLAD (262 aa)) enclose the CoA carboxyltransferase C-terminal domain.

It belongs to the AccA family. In terms of assembly, acetyl-CoA carboxylase is a heterohexamer composed of biotin carboxyl carrier protein (AccB), biotin carboxylase (AccC) and two subunits each of ACCase subunit alpha (AccA) and ACCase subunit beta (AccD).

It is found in the cytoplasm. The enzyme catalyses N(6)-carboxybiotinyl-L-lysyl-[protein] + acetyl-CoA = N(6)-biotinyl-L-lysyl-[protein] + malonyl-CoA. Its pathway is lipid metabolism; malonyl-CoA biosynthesis; malonyl-CoA from acetyl-CoA: step 1/1. Component of the acetyl coenzyme A carboxylase (ACC) complex. First, biotin carboxylase catalyzes the carboxylation of biotin on its carrier protein (BCCP) and then the CO(2) group is transferred by the carboxyltransferase to acetyl-CoA to form malonyl-CoA. This is Acetyl-coenzyme A carboxylase carboxyl transferase subunit alpha from Salmonella arizonae (strain ATCC BAA-731 / CDC346-86 / RSK2980).